The following is a 538-amino-acid chain: CTP synthase (538 aa).

Residues 1-269 (MSPRKYVIVT…ARLVERRLFG (269 aa)) are amidoligase domain. Position 15 (Ser-15) interacts with CTP. Ser-15 is a UTP binding site. 16-21 (SVGKGL) lines the ATP pocket. Residue Tyr-56 coordinates L-glutamine. Residue Asp-73 participates in ATP binding. Mg(2+) is bound by residues Asp-73 and Glu-143. Residues 150 to 152 (DIE), 190 to 195 (KTKPVQ), and Lys-226 each bind CTP. Residues 190 to 195 (KTKPVQ) and Lys-226 contribute to the UTP site. A Glutamine amidotransferase type-1 domain is found at 294–538 (KVAMVGKYTK…FVTAVARLRG (245 aa)). Position 358 (Gly-358) interacts with L-glutamine. Cys-385 serves as the catalytic Nucleophile; for glutamine hydrolysis. Residues 386–389 (FGMQ), Glu-409, and Arg-466 each bind L-glutamine. Residues His-512 and Glu-514 contribute to the active site.

It belongs to the CTP synthase family. Homotetramer.

The catalysed reaction is UTP + L-glutamine + ATP + H2O = CTP + L-glutamate + ADP + phosphate + 2 H(+). The enzyme catalyses L-glutamine + H2O = L-glutamate + NH4(+). It carries out the reaction UTP + NH4(+) + ATP = CTP + ADP + phosphate + 2 H(+). The protein operates within pyrimidine metabolism; CTP biosynthesis via de novo pathway; CTP from UDP: step 2/2. With respect to regulation, allosterically activated by GTP, when glutamine is the substrate; GTP has no effect on the reaction when ammonia is the substrate. The allosteric effector GTP functions by stabilizing the protein conformation that binds the tetrahedral intermediate(s) formed during glutamine hydrolysis. Inhibited by the product CTP, via allosteric rather than competitive inhibition. Functionally, catalyzes the ATP-dependent amination of UTP to CTP with either L-glutamine or ammonia as the source of nitrogen. Regulates intracellular CTP levels through interactions with the four ribonucleotide triphosphates. This Aeropyrum pernix (strain ATCC 700893 / DSM 11879 / JCM 9820 / NBRC 100138 / K1) protein is CTP synthase.